The primary structure comprises 400 residues: ASTRA-associated protein 1 (400 aa).

WD repeat units lie at residues 6 to 54 (SAPQ…PKLQ), 57 to 94 (AHKD…FEMP), 240 to 272 (EYQN…KVVI), and 273 to 312 (HSDP…KGEI).

Belongs to the WD repeat ASA1 family. In terms of assembly, component of the ASTRA chromatin remodeling machinery complex.

Its subcellular location is the nucleus. In terms of biological role, component of the ASTRA complex involved in chromatin remodeling. The protein is ASTRA-associated protein 1 (ASA1) of Lodderomyces elongisporus (strain ATCC 11503 / CBS 2605 / JCM 1781 / NBRC 1676 / NRRL YB-4239) (Yeast).